The chain runs to 207 residues: Probable nicotinate-nucleotide adenylyltransferase (207 aa).

This sequence belongs to the NadD family.

The catalysed reaction is nicotinate beta-D-ribonucleotide + ATP + H(+) = deamido-NAD(+) + diphosphate. It functions in the pathway cofactor biosynthesis; NAD(+) biosynthesis; deamido-NAD(+) from nicotinate D-ribonucleotide: step 1/1. Catalyzes the reversible adenylation of nicotinate mononucleotide (NaMN) to nicotinic acid adenine dinucleotide (NaAD). The protein is Probable nicotinate-nucleotide adenylyltransferase of Desulfitobacterium hafniense (strain DSM 10664 / DCB-2).